The chain runs to 370 residues: MGLWALLPSWVSTTLLLALTALPAALAANSSGRWWGIVNIASSTNLLTDSKSLQLVLEPSLQLLSRKQRRLIRQNPGILHSVSGGLQSAVRECKWQFRNRRWNCPTAPGPHLFGKIVNRGCRETAFIFAITSAGVTHSVARSCSEGSIESCTCDYRRRGPGGPDWHWGGCSDNIDFGRLFGREFVDSGEKGRDLRFLMNLHNNEAGRTTVFSEMRQECKCHGMSGSCTVRTCWMRLPTLRAVGDVLRDRFDGASRVLYGNRGSNRASRAELLRLEPEDPAHKPPSPHDLVYFEKSPNFCTYSGRLGTAGTAGRACNSSSPALDGCELLCCGRGHRTRTQRVTERCNCTFHWCCHVSCRNCTHTRVLHECL.

The signal sequence occupies residues 1-27 (MGLWALLPSWVSTTLLLALTALPAALA). An N-linked (GlcNAc...) asparagine glycan is attached at asparagine 29. 11 disulfide bridges follow: cysteine 93-cysteine 104, cysteine 143-cysteine 151, cysteine 153-cysteine 170, cysteine 218-cysteine 232, cysteine 220-cysteine 227, cysteine 299-cysteine 330, cysteine 315-cysteine 325, cysteine 329-cysteine 369, cysteine 345-cysteine 360, cysteine 347-cysteine 357, and cysteine 352-cysteine 353. Serine 224 carries the O-palmitoleoyl serine; by PORCN lipid modification. Asparagine 316 and asparagine 346 each carry an N-linked (GlcNAc...) asparagine glycan. Asparagine 359 is a glycosylation site (N-linked (GlcNAc...) asparagine).

This sequence belongs to the Wnt family. In terms of assembly, forms a soluble 1:1 complex with AFM; this prevents oligomerization and is required for prolonged biological activity. The complex with AFM may represent the physiological form in body fluids. Interacts with PORCN. Interacts with RSPO1, RSPO2 and RSPO3. Interacts with WLS. Post-translationally, palmitoleoylation is required for efficient binding to frizzled receptors. Palmitoleoylation is necessary for proper trafficking to cell surface. Depalmitoleoylated by NOTUM, leading to inhibit Wnt signaling pathway. In terms of tissue distribution, testis and mid-gestational embryos. In the testis, detected only in postmeiotic germ cells undergoing differentiation from round spermatids into mature spermatozoa. In the embryos, expression is restricted to the developing CNS in regions of the neural tube other than the telencephalon. Expressed in osteoblast; expression levels increase with advancing osteoblast differentiation. Expressed in the brain, femur, spleen, and hematopoietic bone marrow.

The protein resides in the secreted. It is found in the extracellular space. It localises to the extracellular matrix. Its function is as follows. Ligand for members of the frizzled family of seven transmembrane receptors. Acts in the canonical Wnt signaling pathway by promoting beta-catenin-dependent transcriptional activation. In some developmental processes, is also a ligand for the coreceptor RYK, thus triggering Wnt signaling. Plays an essential role in the development of the embryonic brain and central nervous system (CNS). Has a role in osteoblast function, bone development and bone homeostasis. The protein is Proto-oncogene Wnt-1 (Wnt1) of Mus musculus (Mouse).